A 141-amino-acid polypeptide reads, in one-letter code: Large ribosomal subunit protein uL11 (141 aa).

The protein belongs to the universal ribosomal protein uL11 family. In terms of assembly, part of the ribosomal stalk of the 50S ribosomal subunit. Interacts with L10 and the large rRNA to form the base of the stalk. L10 forms an elongated spine to which L12 dimers bind in a sequential fashion forming a multimeric L10(L12)X complex. In terms of processing, one or more lysine residues are methylated.

Its function is as follows. Forms part of the ribosomal stalk which helps the ribosome interact with GTP-bound translation factors. This chain is Large ribosomal subunit protein uL11, found in Clostridium acetobutylicum (strain ATCC 824 / DSM 792 / JCM 1419 / IAM 19013 / LMG 5710 / NBRC 13948 / NRRL B-527 / VKM B-1787 / 2291 / W).